The sequence spans 468 residues: Chitoporin (468 aa).

Positions 1 to 32 (MRTFSGKRSTLALAIAGVTAMSGFMAMPEARA) are cleaved as a signal peptide.

It belongs to the outer membrane porin (Opr) (TC 1.B.25) family.

The protein resides in the cell outer membrane. Involved in the uptake of chitosugars. This is Chitoporin (chiP) from Escherichia coli (strain K12).